The sequence spans 994 residues: Zinc finger protein basonuclin-1 (994 aa).

Positions 1-29 (MRRRPPSRGGRGAARARETRRQPRHRSGR) are disordered. The interval 240–249 (MTFMLPFQFF) is hydrophobic. 2 consecutive C2H2-type zinc fingers follow at residues 357–380 (VFCT…NAVH) and 385–414 (HKCT…PRLH). 2 disordered regions span residues 402–425 (RNRH…RDKD) and 444–472 (TVTS…FPNI). The short motif at 533–539 (PKKKSRK) is the Nuclear localization signal element. Phosphoserine is present on residues Ser-537 and Ser-541. A disordered region spans residues 555–639 (NEKRHNLSSD…HNSERETEQT (85 aa)). Residues 563–578 (SDEDMPLQVVSEDEQE) are compositionally biased toward acidic residues. Basic and acidic residues predominate over residues 603 to 614 (PEGERPCHRESV). The span at 615-630 (IESSGAISQTPEQATH) shows a compositional bias: polar residues. 2 consecutive C2H2-type zinc fingers follow at residues 720–743 (FQCD…KNMH) and 748–775 (HTCT…LNLH). Positions 859–877 (STTSSMKSESSSHSSWDSD) are enriched in low complexity. The interval 859 to 881 (STTSSMKSESSSHSSWDSDGVSE) is disordered. C2H2-type zinc fingers lie at residues 928–951 (ITCH…KTVH) and 956–983 (HKCK…PNLH). The interval 970–994 (VRSRNRHSQNPNLHKSLASSPSHLQ) is disordered.

As to quaternary structure, interacts with HSF2BP (via C-terminus). In terms of processing, phosphorylation on Ser-537 and Ser-541 leads to cytoplasmic localization. In terms of tissue distribution, in epidermis, primarily detected in cells of the basal or immediately suprabasal layers (at protein level). In hair follicles, mainly expressed in the outer root sheath (at protein level). Expressed in epidermis, testis and foreskin, and to a lower extent in thymus, spleen, mammary glands, placenta, brain and heart. Expressed in the ovary, notably in oocytes.

It localises to the nucleus. Its subcellular location is the cytoplasm. The protein resides in the nucleoplasm. In terms of biological role, transcriptional activator. It is likely involved in the regulation of keratinocytes terminal differentiation in squamous epithelia and hair follicles. Required for the maintenance of spermatogenesis. It is involved in the positive regulation of oocyte maturation, probably acting through the control of BMP15 levels and regulation of AKT signaling cascade. May also play a role in the early development of embryos. The protein is Zinc finger protein basonuclin-1 (BNC1) of Homo sapiens (Human).